The sequence spans 184 residues: Gremlin-1 (184 aa).

An N-terminal signal peptide occupies residues 1–24; that stretch reads MNRTAYTVGALLLLLGTLLPAAEG. N-linked (GlcNAc...) asparagine glycans are attached at residues asparagine 2 and asparagine 42. Positions 24-78 are disordered; the sequence is GKKKGSQGAIPPPDKAQHNDSEQTQSPPQPGSRTRGRGQGRGTAMPGEEVLESSQ. Disulfide bonds link cysteine 94–cysteine 144, cysteine 108–cysteine 158, cysteine 118–cysteine 176, and cysteine 122–cysteine 178. The region spanning 94–184 is the CTCK domain; the sequence is CKTQPLKQTI…QCRCISIDLD (91 aa).

The protein belongs to the DAN family. As to quaternary structure, homodimer; can also form homooligomers. Interacts with BMP2; can form higher oligomers with BMP2. Interacts with SLIT1 and SLIT2 in a glycosylation-dependent manner. As to expression, highly expressed in the brain, kidney, spleen, and testis and weakly expressed in the lung and liver. Predominantly expressed in differentiated cells as neurons in brain, type I cells in lung and globlet cells in intestine.

Its subcellular location is the secreted. In terms of biological role, cytokine that may play an important role during carcinogenesis and metanephric kidney organogenesis, as a BMP antagonist required for early limb outgrowth and patterning in maintaining the FGF4-SHH feedback loop. Down-regulates the BMP4 signaling in a dose-dependent manner. Antagonist of BMP2; inhibits BMP2-mediated differentiation of osteoblasts (in vitro). Acts as inhibitor of monocyte chemotaxis. Can inhibit the growth or viability of normal cells but not transformed cells when is overexpressed. This chain is Gremlin-1 (Grem1), found in Rattus norvegicus (Rat).